We begin with the raw amino-acid sequence, 77 residues long: Large ribosomal subunit protein uL29 (77 aa).

It belongs to the universal ribosomal protein uL29 family.

In Corynebacterium jeikeium (strain K411), this protein is Large ribosomal subunit protein uL29.